The chain runs to 95 residues: Cobalt transport protein CbiN (95 aa).

Transmembrane regions (helical) follow at residues His-5 to Gly-25 and Leu-67 to Tyr-87.

It belongs to the CbiN family. As to quaternary structure, forms an energy-coupling factor (ECF) transporter complex composed of an ATP-binding protein (A component, CbiO), a transmembrane protein (T component, CbiQ) and 2 possible substrate-capture proteins (S components, CbiM and CbiN) of unknown stoichimetry.

It is found in the cell membrane. Its pathway is cofactor biosynthesis; adenosylcobalamin biosynthesis. Its function is as follows. Part of the energy-coupling factor (ECF) transporter complex CbiMNOQ involved in cobalt import. The protein is Cobalt transport protein CbiN of Methanothermobacter thermautotrophicus (strain ATCC 29096 / DSM 1053 / JCM 10044 / NBRC 100330 / Delta H) (Methanobacterium thermoautotrophicum).